We begin with the raw amino-acid sequence, 281 residues long: Biotin synthase (281 aa).

The 230-residue stretch at 1 to 230 (MNQKIFLCSI…AQRIMVAGGR (230 aa)) folds into the Radical SAM core domain. 3 residues coordinate [4Fe-4S] cluster: Cys-18, Cys-22, and Cys-25. [2Fe-2S] cluster contacts are provided by Cys-62, Cys-97, and Arg-223.

The protein belongs to the radical SAM superfamily. Biotin synthase family. Homodimer. It depends on [4Fe-4S] cluster as a cofactor. [2Fe-2S] cluster serves as cofactor.

It catalyses the reaction (4R,5S)-dethiobiotin + (sulfur carrier)-SH + 2 reduced [2Fe-2S]-[ferredoxin] + 2 S-adenosyl-L-methionine = (sulfur carrier)-H + biotin + 2 5'-deoxyadenosine + 2 L-methionine + 2 oxidized [2Fe-2S]-[ferredoxin]. It participates in cofactor biosynthesis; biotin biosynthesis; biotin from 7,8-diaminononanoate: step 2/2. Its function is as follows. Catalyzes the conversion of dethiobiotin (DTB) to biotin by the insertion of a sulfur atom into dethiobiotin via a radical-based mechanism. The polypeptide is Biotin synthase (Sulfurimonas denitrificans (strain ATCC 33889 / DSM 1251) (Thiomicrospira denitrificans (strain ATCC 33889 / DSM 1251))).